Here is a 236-residue protein sequence, read N- to C-terminus: UPF0257 lipoprotein YnfC (236 aa).

The N-terminal stretch at 1–16 is a signal peptide; it reads MKYKLLPCLLAILLTG. C17 is lipidated: N-palmitoyl cysteine. C17 carries the S-diacylglycerol cysteine lipid modification.

Belongs to the UPF0257 family.

The protein localises to the cell membrane. The polypeptide is UPF0257 lipoprotein YnfC (Escherichia coli O81 (strain ED1a)).